A 427-amino-acid polypeptide reads, in one-letter code: Enolase (427 aa).

Residue glutamine 162 coordinates (2R)-2-phosphoglycerate. Residue glutamate 204 is the Proton donor of the active site. Mg(2+) contacts are provided by aspartate 241, glutamate 282, and aspartate 309. (2R)-2-phosphoglycerate contacts are provided by lysine 334, arginine 363, serine 364, and lysine 385. Catalysis depends on lysine 334, which acts as the Proton acceptor.

This sequence belongs to the enolase family. Mg(2+) is required as a cofactor.

The protein localises to the cytoplasm. Its subcellular location is the secreted. It is found in the cell surface. The enzyme catalyses (2R)-2-phosphoglycerate = phosphoenolpyruvate + H2O. Its pathway is carbohydrate degradation; glycolysis; pyruvate from D-glyceraldehyde 3-phosphate: step 4/5. Catalyzes the reversible conversion of 2-phosphoglycerate (2-PG) into phosphoenolpyruvate (PEP). It is essential for the degradation of carbohydrates via glycolysis. The polypeptide is Enolase (Frankia alni (strain DSM 45986 / CECT 9034 / ACN14a)).